The following is a 285-amino-acid chain: Probable endonuclease 4 (285 aa).

Positions 69, 109, 145, 179, 182, 216, 229, 231, and 261 each coordinate Zn(2+).

Belongs to the AP endonuclease 2 family. It depends on Zn(2+) as a cofactor.

It catalyses the reaction Endonucleolytic cleavage to 5'-phosphooligonucleotide end-products.. Functionally, endonuclease IV plays a role in DNA repair. It cleaves phosphodiester bonds at apurinic or apyrimidinic (AP) sites, generating a 3'-hydroxyl group and a 5'-terminal sugar phosphate. The sequence is that of Probable endonuclease 4 from Shigella boydii serotype 4 (strain Sb227).